We begin with the raw amino-acid sequence, 566 residues long: MKRNISMSLQRLLIILMMISFLFTSLLVPSVSATNLNTISTCLINYKVSNFSVYPTRNHAGNRYYNLLDFSIQNLRFAASSKPKPTVIIVPESKEQLVSSVLCCRQGSYEIRVRCGGHSYEGTSYVSFDGSPFVVIDLMKLDDVSVDLDSETAWVQGGATLGQTYYAISRASDVHGFSAGSCPTVGVGGHISGGGFGFLSRKYGLAADNVVDALLVDAEGRLLDRKAMGEEVFWAIRGGGGGIWGIIYAWKIRLLKVPKTVTSFIVPRPGSKRYVSQLVHKWQLVAPKLDDDFYLSISMSSASKGNIPIEINAQFSGFYLGTKTEAISILNEAFPELGVVESDCKEMSWIESTLFFSELDNVANTSDVSRLKERYFENKSYFKAKSDHVKTPISVGGIMTALDVLEKEPNGHVIFDPYGAAMQRISEEAIAFPHRKGNLFRIQYLVVWKEKDNNNIAKSNGYIEWIREFYNTMAPHVSSSPRAAYVNYMDLDLGVMDDYLMLNTSITASADHAVERARVWGEKYFLNNYDRLVKAKTKIDPLNVFRHQQGIPPMFASMPEHTYSSK.

The first 33 residues, 1 to 33, serve as a signal peptide directing secretion; the sequence is MKRNISMSLQRLLIILMMISFLFTSLLVPSVSA. C42 and C103 form a disulfide bridge. Residue N50 is glycosylated (N-linked (GlcNAc...) asparagine). An FAD-binding PCMH-type domain is found at 81 to 257; it reads SKPKPTVIIV…YAWKIRLLKV (177 aa). A Pros-8alpha-FAD histidine modification is found at H118. 3 N-linked (GlcNAc...) asparagine glycosylation sites follow: N364, N378, and N503.

The protein belongs to the oxygen-dependent FAD-linked oxidoreductase family. Requires FAD as cofactor.

The protein resides in the vacuole. It participates in alkaloid biosynthesis; nicotine biosynthesis. Involved in the biosynthesis of pyridine alkaloid natural products, leading mainly to the production of anabasine, anatabine, nicotine and nornicotine, effective deterrents against herbivores with antiparasitic and pesticide properties (neurotoxins); nornicotine serves as the precursor in the synthesis of the carcinogen compound N'-nitrosonornicotine (NNN). Catalyzes a late oxidation step subsequent to the pyridine ring condensation reaction in the biosynthesis of alkaloids. The protein is Berberine bridge enzyme-like D-2 of Nicotiana tabacum (Common tobacco).